Consider the following 203-residue polypeptide: Thymidylate kinase (203 aa).

ATP is bound at residue 10–17; that stretch reads GVEGSGKT.

It belongs to the thymidylate kinase family.

It catalyses the reaction dTMP + ATP = dTDP + ADP. Its function is as follows. Phosphorylation of dTMP to form dTDP in both de novo and salvage pathways of dTTP synthesis. The polypeptide is Thymidylate kinase (Carboxydothermus hydrogenoformans (strain ATCC BAA-161 / DSM 6008 / Z-2901)).